The primary structure comprises 179 residues: Ferric nitrobindin-like protein (179 aa).

The short motif at 17-23 is the GXWXGXG element; it reads GRWEGLG.

Belongs to the nitrobindin family.

The protein is Ferric nitrobindin-like protein of Thermobifida fusca (strain YX).